The sequence spans 272 residues: NH(3)-dependent NAD(+) synthetase (272 aa).

45-52 lines the ATP pocket; it reads GISGGQDS. Position 51 (Asp-51) interacts with Mg(2+). Arg-138 provides a ligand contact to deamido-NAD(+). ATP is bound at residue Thr-158. Glu-163 contacts Mg(2+). Deamido-NAD(+) contacts are provided by Lys-171 and Asp-178. Residues Lys-187 and Thr-209 each coordinate ATP. 258-259 is a binding site for deamido-NAD(+); it reads HK.

The protein belongs to the NAD synthetase family. Homodimer.

The catalysed reaction is deamido-NAD(+) + NH4(+) + ATP = AMP + diphosphate + NAD(+) + H(+). It functions in the pathway cofactor biosynthesis; NAD(+) biosynthesis; NAD(+) from deamido-NAD(+) (ammonia route): step 1/1. In terms of biological role, catalyzes the ATP-dependent amidation of deamido-NAD to form NAD. Uses ammonia as a nitrogen source. This Bacillus cereus (strain G9842) protein is NH(3)-dependent NAD(+) synthetase.